The following is a 157-amino-acid chain: uncharacterized protein (157 aa).

One can recognise an N-acetyltransferase domain in the interval 3-157; the sequence is FTLEDMTEEE…TNIRMRKQLC (155 aa).

Belongs to the acetyltransferase family.

This is an uncharacterized protein from Bacillus subtilis (strain 168).